The chain runs to 169 residues: Disulfide bond formation protein B 1 (169 aa).

Residues 1 to 14 (MSDNTLYLRREKRF) lie on the Cytoplasmic side of the membrane. Residues 15 to 31 (LVLLGIICLALIGGALY) traverse the membrane as a helical segment. Over 32 to 49 (MQVVLDEAPCPLCILQRY) the chain is Periplasmic. A disulfide bridge links C41 with C44. The chain crosses the membrane as a helical span at residues 50 to 65 (ALLFIAIFAFIGAAMP). Topologically, residues 66-72 (GRRSVTA) are cytoplasmic. A helical membrane pass occupies residues 73-89 (FETLVTLSALGGIAAAG). The Periplasmic segment spans residues 90–144 (RHVWILAHPSDSCGIDVLQPIVDGLPLATLFPTGFQVSGFCTTPYPPVLGLSLAQ). A disulfide bond links C102 and C130. Residues 145 to 163 (WALTAFVLTAVLVPACIIR) traverse the membrane as a helical segment. Over 164 to 169 (NRRKPY) the chain is Cytoplasmic.

This sequence belongs to the DsbB family.

Its subcellular location is the cell inner membrane. Functionally, required for disulfide bond formation in some periplasmic proteins. Acts by oxidizing the DsbA protein. The chain is Disulfide bond formation protein B 1 from Pseudomonas syringae pv. syringae (strain B728a).